The following is a 383-amino-acid chain: Adaptive-response sensory kinase SasA (383 aa).

In terms of domain architecture, Histidine kinase spans 152–365; sequence MVAHELRTPL…CFTFNVPIWQ (214 aa). The residue at position 155 (His-155) is a Phosphohistidine; by autocatalysis.

Homooligomerizes. Interacts with KaiC. Participates in the KaiABC clock complex, whose core is composed of a KaiC homohexamer, 6 KaiB and up to 6 KaiA dimers. SasA and KaiB(fs) compete to bind to KaiC.

The enzyme catalyses ATP + protein L-histidine = ADP + protein N-phospho-L-histidine.. In terms of biological role, member of the two-component regulatory system SasA/RpaA involved in genome-wide circadian gene expression. One of several clock output pathways. Participates in the Kai clock protein complex, the main circadian regulator in cyanobacteria, via its interaction with KaiC. KaiC enhances the autophosphorylation activity of SasA, which then transfers its phosphate group to RpaA to activate it. In addition to its output function, recruits fold-shifted KaiB (KaiB(fs)) to KaiC to cooperatively form the KaiB(6):KaiC(6) complex (independent of SasA kinase activity). Required for robustness of the circadian rhythm of gene expression and is involved in clock output, also required for adaptation to light/dark cycles. In Synechococcus sp. (strain CC9311), this protein is Adaptive-response sensory kinase SasA.